The chain runs to 261 residues: 3-hydroxyacyl-CoA dehydrogenase type-2 (261 aa).

The residue at position 2 (Ala-2) is an N-acetylalanine. Ser-20 and Asp-41 together coordinate NAD(+). Lys-53 is subject to N6-acetyllysine; alternate. Position 53 is an N6-succinyllysine; alternate (Lys-53). Position 65 (Val-65) interacts with NAD(+). At Lys-69 the chain carries N6-acetyllysine. Cys-91 provides a ligand contact to NAD(+). Residues Lys-99 and Lys-105 each carry the N6-acetyllysine modification. Lys-107 is modified (N6-acetyllysine; alternate). Lys-107 carries the N6-succinyllysine; alternate modification. Residue Ser-155 coordinates substrate. NAD(+) contacts are provided by Tyr-168, Lys-172, Phe-201, and Thr-203. Tyr-168 serves as the catalytic Proton acceptor. At Lys-212 the chain carries N6-acetyllysine; alternate. Residue Lys-212 is modified to N6-succinyllysine; alternate.

Belongs to the short-chain dehydrogenases/reductases (SDR) family. Homotetramer. Component of mitochondrial ribonuclease P, a complex composed of TRMT10C/MRPP1, HSD17B10/MRPP2 and PRORP/MRPP3. Interacts with TRMT10C/MRPP1; forming the MRPP1-MRPP2 subcomplex of the mitochondrial ribonuclease P complex.

It localises to the mitochondrion. The protein resides in the mitochondrion matrix. It is found in the mitochondrion nucleoid. It catalyses the reaction a (3S)-3-hydroxyacyl-CoA + NAD(+) = a 3-oxoacyl-CoA + NADH + H(+). The enzyme catalyses (2S,3S)-3-hydroxy-2-methylbutanoyl-CoA + NAD(+) = 2-methyl-3-oxobutanoyl-CoA + NADH + H(+). It carries out the reaction testosterone + NAD(+) = androst-4-ene-3,17-dione + NADH + H(+). The catalysed reaction is 5alpha-androstane-3alpha,17beta-diol + NAD(+) = 17beta-hydroxy-5alpha-androstan-3-one + NADH + H(+). It catalyses the reaction 17beta-estradiol + NAD(+) = estrone + NADH + H(+). The enzyme catalyses cholate + NAD(+) = 3alpha,12alpha-dihydroxy-7-oxo-5beta-cholanate + NADH + H(+). It carries out the reaction (3S)-3-hydroxybutanoyl-CoA + NAD(+) = acetoacetyl-CoA + NADH + H(+). The catalysed reaction is (3S)-hydroxyoctanoyl-CoA + NAD(+) = 3-oxooctanoyl-CoA + NADH + H(+). It catalyses the reaction (3S)-hydroxyhexadecanoyl-CoA + NAD(+) = 3-oxohexadecanoyl-CoA + NADH + H(+). The enzyme catalyses 17beta-hydroxy-5alpha-androstan-3-one + NAD(+) = 5alpha-androstan-3,17-dione + NADH + H(+). It carries out the reaction 5alpha-pregnan-20beta-ol-3-one + NAD(+) = 5alpha-pregnane-3,20-dione + NADH + H(+). The catalysed reaction is 3alpha-hydroxy-5alpha-pregnan-20-one + NAD(+) = 5alpha-pregnane-3,20-dione + NADH + H(+). It catalyses the reaction cortisone + NAD(+) = 17alpha-hydroxypregn-4-en-3,11,20-trione-21-al + NADH + H(+). The enzyme catalyses 11-dehydrocorticosterone + NAD(+) = pregn-4-ene-3,11,20,21-tetraone + NADH + H(+). It carries out the reaction cortisol + NAD(+) = 11beta,17alpha-dihydroxypregn-4-ene-3,20,21-trione + NADH + H(+). The catalysed reaction is chenodeoxycholate + NAD(+) = 7-oxolithocholate + NADH + H(+). It catalyses the reaction ursodeoxycholate + NAD(+) = 7-oxolithocholate + NADH + H(+). The enzyme catalyses 3beta,7beta-dihydroxy-5beta-cholan-24-oate + NAD(+) = 3beta-hydroxy-7-oxo-5beta-cholan-24-oate + NADH + H(+). It participates in amino-acid degradation; L-isoleucine degradation. Its pathway is lipid metabolism; fatty acid beta-oxidation. It functions in the pathway steroid metabolism. The protein operates within lipid metabolism; bile acid biosynthesis. Its function is as follows. Mitochondrial dehydrogenase involved in pathways of fatty acid, branched-chain amino acid and steroid metabolism. Acts as (S)-3-hydroxyacyl-CoA dehydrogenase in mitochondrial fatty acid beta-oxidation, a major degradation pathway of fatty acids. Catalyzes the third step in the beta-oxidation cycle, namely the reversible conversion of (S)-3-hydroxyacyl-CoA to 3-ketoacyl-CoA. Preferentially accepts straight medium- and short-chain acyl-CoA substrates with highest efficiency for (3S)-hydroxybutanoyl-CoA. Acts as 3-hydroxy-2-methylbutyryl-CoA dehydrogenase in branched-chain amino acid catabolic pathway. Catalyzes the oxidation of 3-hydroxy-2-methylbutanoyl-CoA into 2-methyl-3-oxobutanoyl-CoA, a step in isoleucine degradation pathway. Has hydroxysteroid dehydrogenase activity toward steroid hormones and bile acids. Catalyzes the oxidation of 3alpha-, 17beta-, 20beta- and 21-hydroxysteroids and 7alpha- and 7beta-hydroxy bile acids. Oxidizes allopregnanolone/brexanolone at the 3alpha-hydroxyl group, which is known to be critical for the activation of gamma-aminobutyric acid receptors (GABAARs) chloride channel. Has phospholipase C-like activity toward cardiolipin and its oxidized species. Likely oxidizes the 2'-hydroxyl in the head group of cardiolipin to form a ketone intermediate that undergoes nucleophilic attack by water and fragments into diacylglycerol, dihydroxyacetone and orthophosphate. Has higher affinity for cardiolipin with oxidized fatty acids and may degrade these species during the oxidative stress response to protect cells from apoptosis. By interacting with intracellular amyloid-beta, it may contribute to the neuronal dysfunction associated with Alzheimer disease (AD). Essential for structural and functional integrity of mitochondria. Functionally, in addition to mitochondrial dehydrogenase activity, moonlights as a component of mitochondrial ribonuclease P, a complex that cleaves tRNA molecules in their 5'-ends. Together with TRMT10C/MRPP1, forms a subcomplex of the mitochondrial ribonuclease P, named MRPP1-MRPP2 subcomplex, which displays functions that are independent of the ribonuclease P activity. The MRPP1-MRPP2 subcomplex catalyzes the formation of N(1)-methylguanine and N(1)-methyladenine at position 9 (m1G9 and m1A9, respectively) in tRNAs; HSD17B10/MRPP2 acting as a non-catalytic subunit. The MRPP1-MRPP2 subcomplex also acts as a tRNA maturation platform: following 5'-end cleavage by the mitochondrial ribonuclease P complex, the MRPP1-MRPP2 subcomplex enhances the efficiency of 3'-processing catalyzed by ELAC2, retains the tRNA product after ELAC2 processing and presents the nascent tRNA to the mitochondrial CCA tRNA nucleotidyltransferase TRNT1 enzyme. Associates with mitochondrial DNA complexes at the nucleoids to initiate RNA processing and ribosome assembly. This Mus musculus (Mouse) protein is 3-hydroxyacyl-CoA dehydrogenase type-2 (Hsd17b10).